The following is a 296-amino-acid chain: Putative methyltransferase HI_1523 (296 aa).

It belongs to the N(4)/N(6)-methyltransferase family.

This is Putative methyltransferase HI_1523 from Haemophilus influenzae (strain ATCC 51907 / DSM 11121 / KW20 / Rd).